Consider the following 614-residue polypeptide: Fimbrin (614 aa).

EF-hand domains lie at 16 to 50 (EEIL…DSKK) and 51 to 86 (GSYD…LKKG). Residues Asp-29, Asp-31, Tyr-35, Thr-40, Asp-66, Ser-68, Arg-70, and Asp-75 each coordinate Ca(2+). Actin-binding regions lie at residues 98–368 (TIKG…GLEP) and 369–614 (LNEE…LMAV). 4 consecutive Calponin-homology (CH) domains span residues 112-233 (EEER…RRGL), 261-364 (LPPE…NTHP), 385-495 (EREA…RMNI), and 508-614 (TLSD…LMAV).

The protein resides in the cytoplasm. The protein localises to the cytoskeleton. Its subcellular location is the actin patch. Functionally, binds to actin, and functionally associates with actin structures involved in the development and maintenance of cell polarity. Plays a role in cytokinesis. Plays important roles in mating and in spore formation. This Schizosaccharomyces pombe (strain 972 / ATCC 24843) (Fission yeast) protein is Fimbrin (fim1).